We begin with the raw amino-acid sequence, 310 residues long: Ribosomal RNA small subunit methyltransferase H (310 aa).

Residues 32–34 (GGH), aspartate 52, phenylalanine 79, aspartate 100, and glutamine 107 contribute to the S-adenosyl-L-methionine site.

Belongs to the methyltransferase superfamily. RsmH family.

It is found in the cytoplasm. The catalysed reaction is cytidine(1402) in 16S rRNA + S-adenosyl-L-methionine = N(4)-methylcytidine(1402) in 16S rRNA + S-adenosyl-L-homocysteine + H(+). Specifically methylates the N4 position of cytidine in position 1402 (C1402) of 16S rRNA. The protein is Ribosomal RNA small subunit methyltransferase H of Bacillus anthracis (strain A0248).